Here is a 206-residue protein sequence, read N- to C-terminus: RNA pyrophosphohydrolase (206 aa).

A Nudix hydrolase domain is found at 6-149 (GYRPNVGIVL…KRGVYARALR (144 aa)). The Nudix box signature appears at 38 to 59 (GGMNTDETPVEAMYRELQEETG). Residues 175-206 (MPGHTAGHDRPRKRPRTRGYWPKKATGDGPAS) form a disordered region.

It belongs to the Nudix hydrolase family. RppH subfamily. A divalent metal cation serves as cofactor.

Functionally, accelerates the degradation of transcripts by removing pyrophosphate from the 5'-end of triphosphorylated RNA, leading to a more labile monophosphorylated state that can stimulate subsequent ribonuclease cleavage. This is RNA pyrophosphohydrolase from Stenotrophomonas maltophilia (strain K279a).